The chain runs to 434 residues: Putative ankyrin repeat protein FPV023 (434 aa).

7 ANK repeats span residues 33–62, 134–163, 167–197, 201–230, 236–265, 269–299, and 303–330; these read RLKI…DPVA, LTIS…DINF, IGNT…DINI, YGTT…DPNS, IGTK…DPNI, AGVT…DPNI, and NGTT…DINI.

This chain is Putative ankyrin repeat protein FPV023, found in Fowlpox virus (strain NVSL) (FPV).